A 420-amino-acid chain; its full sequence is Nucleobindin-2 (420 aa).

The first 24 residues, 1–24, serve as a signal peptide directing secretion; that stretch reads MRWRIIQVQYCFLLVPCMLTALEA. A DNA-binding region spans residues 171–223; sequence RTRHEEFKKYEMMKEHERREYLKTLSEEKRKEEESKFEEMKRKHEDHPKVNHP. Positions 193-225 are disordered; the sequence is KTLSEEKRKEEESKFEEMKRKHEDHPKVNHPGS. Residues 213 to 420 form a binds to necdin region; the sequence is KHEDHPKVNH…AGELKFEPHT (208 aa). 2 consecutive EF-hand domains span residues 241 to 276 and 293 to 328; these read PNDF…ELEK and ERLR…KEFL. D254, N256, D258, E265, D306, N308, D310, and E317 together coordinate Ca(2+). The GBA signature appears at 304–334; the sequence is EIDNNKDRLVTLEEFLRATEKKEFLEPDSWE. S332 is subject to Phosphoserine. Over residues 365 to 389 the composition is skewed to basic and acidic residues; it reads AEELQKQKEDLQRQHDHLEAQKQEY. The segment at 365–420 is disordered; that stretch reads AEELQKQKEDLQRQHDHLEAQKQEYHQAVQHLEQKKLQQGIAPSGPAGELKFEPHT.

It belongs to the nucleobindin family. Interacts (via GBA motif) with guanine nucleotide-binding protein G(i) alpha subunit GNAI3. Preferentially interacts with inactive rather than active GNAI3. Interaction with GNAI3 is inhibited when NUCB2 binds calcium, probably due to a conformational change which renders the GBA motif inaccessible. Binds to the postmitotic growth suppressor NDN; coexpression abolishes NUCB2 secretion. Interacts with MC4R. Found in liver, heart, thymus, muscle, intestine, kidney, lung, spleen and throughout the brain, in cerebral cortex, hippocampus, hypothalamus and medulla oblongata. Nucb2 and necdin levels were higher in postmitotic neurons.

The protein localises to the cytoplasm. Its subcellular location is the perikaryon. It localises to the endoplasmic reticulum. It is found in the golgi apparatus. The protein resides in the nucleus envelope. The protein localises to the membrane. Its subcellular location is the secreted. Its function is as follows. Calcium-binding protein which may have a role in calcium homeostasis. Acts as a non-receptor guanine nucleotide exchange factor which binds to and activates guanine nucleotide-binding protein (G-protein) alpha subunit GNAI3. Anorexigenic peptide, seems to play an important role in hypothalamic pathways regulating food intake and energy homeostasis, acting in a leptin-independent manner. May also exert hypertensive roles and modulate blood pressure through directly acting on peripheral arterial resistance. In intestinal epithelial cells, plays a role in the inhibition of hepatic glucose production via MC4R receptor leading to increased cyclic adenosine monophosphate (cAMP) levels and glucagon-like peptide 1 (GLP-1) secretion. The chain is Nucleobindin-2 (Nucb2) from Mus musculus (Mouse).